Consider the following 466-residue polypeptide: Probable periplasmic serine protease do/HhoA-like (466 aa).

An N-terminal signal peptide occupies residues 1–29 (MKKTRFVLNSIALGLSVLSTSFVAHVAQA). Active-site charge relay system residues include His-120, Asp-150, and Ser-226. PDZ domains are found at residues 270 to 361 (ILEF…LRDG) and 367 to 458 (KMKL…LRGD).

The protein belongs to the peptidase S1C family.

The protein resides in the periplasm. This is Probable periplasmic serine protease do/HhoA-like from Haemophilus influenzae (strain ATCC 51907 / DSM 11121 / KW20 / Rd).